A 539-amino-acid polypeptide reads, in one-letter code: Nucleobase-ascorbate transporter 8 (539 aa).

The interval 1–20 is disordered; it reads MAGDGVENAKPPQKQEDLQP. Transmembrane regions (helical) follow at residues 44–64, 79–99, 101–121, 141–161, 167–187, 189–209, 229–249, 295–315, 368–388, 399–421, 433–453, and 470–490; these read ILLG…IPTM, LIQT…FFGT, LPAV…IVLA, IQGA…SGLW, FLSP…LYEQ, FPML…LVIF, FAVI…TIGG, IFAM…TYIA, VGSR…SILG, APIV…LSLI, FILG…YQYT, and NIIN…AFFL.

It belongs to the nucleobase:cation symporter-2 (NCS2) (TC 2.A.40) family. In terms of tissue distribution, highly expressed in ovules, endosperm and embryo.

It localises to the cell membrane. In Arabidopsis thaliana (Mouse-ear cress), this protein is Nucleobase-ascorbate transporter 8 (NAT8).